The primary structure comprises 388 residues: Probable tRNA sulfurtransferase (388 aa).

A THUMP domain is found at 55-162 (VTLDDKLKKI…PEGVLIFTDR (108 aa)). Residues 180 to 181 (LL), 205 to 206 (TF), Arg-264, Gly-286, and Gln-295 contribute to the ATP site.

The protein belongs to the ThiI family.

The protein resides in the cytoplasm. It catalyses the reaction [ThiI sulfur-carrier protein]-S-sulfanyl-L-cysteine + a uridine in tRNA + 2 reduced [2Fe-2S]-[ferredoxin] + ATP + H(+) = [ThiI sulfur-carrier protein]-L-cysteine + a 4-thiouridine in tRNA + 2 oxidized [2Fe-2S]-[ferredoxin] + AMP + diphosphate. The catalysed reaction is [ThiS sulfur-carrier protein]-C-terminal Gly-Gly-AMP + S-sulfanyl-L-cysteinyl-[cysteine desulfurase] + AH2 = [ThiS sulfur-carrier protein]-C-terminal-Gly-aminoethanethioate + L-cysteinyl-[cysteine desulfurase] + A + AMP + 2 H(+). It functions in the pathway cofactor biosynthesis; thiamine diphosphate biosynthesis. In terms of biological role, catalyzes the ATP-dependent transfer of a sulfur to tRNA to produce 4-thiouridine in position 8 of tRNAs, which functions as a near-UV photosensor. Also catalyzes the transfer of sulfur to the sulfur carrier protein ThiS, forming ThiS-thiocarboxylate. This is a step in the synthesis of thiazole, in the thiamine biosynthesis pathway. The sulfur is donated as persulfide by IscS. The chain is Probable tRNA sulfurtransferase from Thermotoga maritima (strain ATCC 43589 / DSM 3109 / JCM 10099 / NBRC 100826 / MSB8).